The primary structure comprises 796 residues: Deadenylation-dependent mRNA-decapping factor PAT1 (796 aa).

Disordered regions lie at residues 1 to 21 (MSFF…DFEE), 164 to 200 (MGHP…PPPP), and 365 to 465 (KERP…NGNG). Ser2 carries the post-translational modification N-acetylserine. The segment covering 165-192 (GHPQGLPQGPPQQQFPMQPASGQPGPSQ) has biased composition (low complexity). Over residues 377 to 402 (AAGNSSQDNKQANTVLGKISSTLNSK) the composition is skewed to polar residues. Low complexity-rich tracts occupy residues 406–415 (RQLQIPRQQP) and 434–450 (ASSG…AVAS). Residues Ser456 and Ser457 each carry the phosphoserine modification.

Belongs to the PAT1 family. As to quaternary structure, associates with the 40S ribosomal subunit. Associates with the heptameric LSM1-LSM7 complex. Interacts directly with LSM2 and LSM3 within the LSM1-LSM7 complex. Interacts with DHH1, LSM1, LSM5, RPB4, RPB7 and with topoisomerase TOP2. Interacts with CDC33, PAB1, TIF4631 and TIF4632 in an RNA-dependent manner. Binds mRNAs.

Its subcellular location is the cytoplasm. The protein localises to the nucleus. The protein resides in the P-body. It localises to the chromosome. It is found in the centromere. Its subcellular location is the kinetochore. The protein localises to the stress granule. Its function is as follows. Activator of decapping that functions as a general and active mechanism of translational repression and required for P-body formation. First decay factor recruited to mRNA, at a time when the mRNA is still associated with translation factors. Subsequently, PAT1 recruits the hepta-heterodimer LSM1-LSM7 complex to P-bodies. In association with the LSM1-LSM7 complex, stabilizes the 3' terminus of mRNAs. This association is also required for mosaic virus genomic RNA translation. Also together with the LSM1-LSM7 complex, the LSM1-LSM7 complex binds to osmotic stress-activated mRNAs to attenuate the osmotic stress response, probably by limiting ribosome access to the mRNA and consequently translation. Modulates the rates of mRNA-decapping that occur following deadenylation. Might be required for promoting the formation or the stabilization of the pre-initiation translation complexes. Required for 40S ribosomal subunit joining to capped and/or polyadenylated mRNA. With other P-body components, enhances the formation of retrotransposition-competent Ty1 virus-like particles. Structural component of the kinetochore and associates with centromeres in a NDC10-dependent manner. Involved in maintaining the structural integrity of centromeric chromatin to facilitate faithful chromosome segregation and proper kinetochore function. The polypeptide is Deadenylation-dependent mRNA-decapping factor PAT1 (PAT1) (Saccharomyces cerevisiae (strain ATCC 204508 / S288c) (Baker's yeast)).